The chain runs to 1555 residues: Phospholipid-transporting ATPase DNF1 (1555 aa).

Residues 1–85 (MAPPQEEGGG…SSNNGGSAPR (85 aa)) are disordered. The Cytoplasmic segment spans residues 1-134 (MAPPQEEGGG…PKNLWFQFHN (134 aa)). Positions 22–37 (WATRRLTVKSGARKRL) are enriched in basic residues. Positions 72 to 82 (GSISSSNNGGS) are enriched in low complexity. A helical membrane pass occupies residues 135–155 (IANIFFLFLVILVIFPIFGGV). Residue asparagine 156 is a topological domain, extracellular. A helical membrane pass occupies residues 157 to 177 (PGLNSVPLIVIITVTAIKDAI). The Cytoplasmic segment spans residues 178–491 (EDYRRTILDI…ARIARELNFN (314 aa)). The segment at 257–288 (TRTAPWDPSHRRSVASHTEEIQMTPVPSPVPH) is disordered. The chain crosses the membrane as a helical span at residues 492 to 512 (VICNFGILLIMCLIAAIANGI). Residues 513–537 (AWGKTDASLAWFEYGSIGGTPALTG) lie on the Extracellular side of the membrane. A helical transmembrane segment spans residues 538–558 (FITFWAAVIVFQNLVPISLYI). At 559–1123 (SLEIVRTLQA…TISNFFYKNM (565 aa)) the chain is on the cytoplasmic side. Aspartate 606 serves as the catalytic 4-aspartylphosphate intermediate. ATP contacts are provided by aspartate 606, lysine 607, threonine 608, glutamate 740, phenylalanine 781, serine 783, lysine 786, lysine 804, arginine 839, threonine 840, threonine 919, glycine 920, aspartate 921, arginine 1031, and lysine 1037. Aspartate 606 is a Mg(2+) binding site. Threonine 608 contacts Mg(2+). Aspartate 1057 provides a ligand contact to Mg(2+). ATP is bound by residues asparagine 1060 and aspartate 1061. Aspartate 1061 lines the Mg(2+) pocket. The helical transmembrane segment at 1124–1144 (IWTWSIFWYQCYCNFDIAYIF) threads the bilayer. Residues 1145–1146 (EY) lie on the Extracellular side of the membrane. The chain crosses the membrane as a helical span at residues 1147 to 1167 (TYILMFNLFFTSVPVILMGVL). The Cytoplasmic portion of the chain corresponds to 1168-1200 (DQDVSDTVSLAVPQLYRRGIERKEWTQTKFWLY). A helical transmembrane segment spans residues 1201-1221 (MIDGVYQSVMSFFIPFIFVVL). Over 1222 to 1237 (TPTAAGNGLDVSERTR) the chain is Extracellular. The helical transmembrane segment at 1238-1258 (LGAYIAHPAVITINGYILINT) threads the bilayer. Residues 1259–1262 (YRWD) are Cytoplasmic-facing. The chain crosses the membrane as a helical span at residues 1263–1283 (WLMLLSIVLSDVFIFFWTGVY). Residues 1284–1302 (TATTYSAGFYQAAPQVYQE) lie on the Extracellular side of the membrane. Residues 1303–1323 (LTFWMCLIVTPALCLLPRLVV) traverse the membrane as a helical segment. Position 1320 (arginine 1320) interacts with a 1,2-diacyl-sn-glycero-3-phospho-L-serine. Residues 1324–1555 (KCIQKQRFPY…EGEPPREPPM (232 aa)) lie on the Cytoplasmic side of the membrane. 2 disordered regions span residues 1364 to 1456 (VEGE…ERTR) and 1489 to 1555 (ESTH…EPPM). Residues 1406–1432 (ATHNTRAQNGSDGTTYIMQSRTSTELQ) show a composition bias toward polar residues. 2 stretches are compositionally biased toward basic and acidic residues: residues 1436–1456 (PFDR…ERTR) and 1540–1555 (KSID…EPPM).

The protein belongs to the cation transport ATPase (P-type) (TC 3.A.3) family. Type IV subfamily. Component of a flippase complex consisting of DNF1 and CDC50. Interacts with CDC50; the interaction is direct. Mg(2+) serves as cofactor.

It localises to the cell membrane. Its subcellular location is the endosome membrane. It is found in the golgi apparatus. The protein resides in the trans-Golgi network membrane. It catalyses the reaction ATP + H2O + phospholipidSide 1 = ADP + phosphate + phospholipidSide 2.. The catalysed reaction is a 1,2-diacyl-sn-glycero-3-phosphoethanolamine(out) + ATP + H2O = a 1,2-diacyl-sn-glycero-3-phosphoethanolamine(in) + ADP + phosphate + H(+). It carries out the reaction a 1,2-diacyl-sn-glycero-3-phosphocholine(out) + ATP + H2O = a 1,2-diacyl-sn-glycero-3-phosphocholine(in) + ADP + phosphate + H(+). The enzyme catalyses a beta-D-glucosyl-(1&lt;-&gt;1')-N-acylsphing-4-enine(out) + ATP + H2O = a beta-D-glucosyl-(1&lt;-&gt;1')-N-acylsphing-4-enine(in) + ADP + phosphate + H(+). It catalyses the reaction a 1,2-diacyl-sn-glycero-3-phospho-L-serine(out) + ATP + H2O = a 1,2-diacyl-sn-glycero-3-phospho-L-serine(in) + ADP + phosphate + H(+). Functionally, catalytic component of a P4-ATPase flippase complex which catalyzes the hydrolysis of ATP coupled to the transport of phosphatidylcholine and phosphatidylserine from the lumenal to the cytosolic leaflet of membranes and ensures the maintenance of asymmetric distribution of phospholipids. May also transport glucosylceramide and phosphatidylethanolamine. This chain is Phospholipid-transporting ATPase DNF1, found in Chaetomium thermophilum (strain DSM 1495 / CBS 144.50 / IMI 039719) (Thermochaetoides thermophila).